The following is a 125-amino-acid chain: Large ribosomal subunit protein bL19 (125 aa).

This sequence belongs to the bacterial ribosomal protein bL19 family.

Its function is as follows. This protein is located at the 30S-50S ribosomal subunit interface and may play a role in the structure and function of the aminoacyl-tRNA binding site. The chain is Large ribosomal subunit protein bL19 from Wolbachia pipientis subsp. Culex pipiens (strain wPip).